A 158-amino-acid polypeptide reads, in one-letter code: Small ribosomal subunit protein uS13 (158 aa).

It belongs to the universal ribosomal protein uS13 family. In terms of assembly, part of the 30S ribosomal subunit. Forms a loose heterodimer with protein S19. Forms two bridges to the 50S subunit in the 70S ribosome.

Located at the top of the head of the 30S subunit, it contacts several helices of the 16S rRNA. In the 70S ribosome it contacts the 23S rRNA (bridge B1a) and protein L5 of the 50S subunit (bridge B1b), connecting the 2 subunits; these bridges are implicated in subunit movement. This chain is Small ribosomal subunit protein uS13, found in Picrophilus torridus (strain ATCC 700027 / DSM 9790 / JCM 10055 / NBRC 100828 / KAW 2/3).